A 189-amino-acid chain; its full sequence is Elongation factor P 2 (189 aa).

The protein belongs to the elongation factor P family.

Its subcellular location is the cytoplasm. Its pathway is protein biosynthesis; polypeptide chain elongation. Its function is as follows. Involved in peptide bond synthesis. Stimulates efficient translation and peptide-bond synthesis on native or reconstituted 70S ribosomes in vitro. Probably functions indirectly by altering the affinity of the ribosome for aminoacyl-tRNA, thus increasing their reactivity as acceptors for peptidyl transferase. In Lactobacillus acidophilus (strain ATCC 700396 / NCK56 / N2 / NCFM), this protein is Elongation factor P 2.